Consider the following 225-residue polypeptide: Probable manganese catalase (225 aa).

Glutamate 37 is a binding site for Mn(2+). Aspartate 58 and aspartate 62 together coordinate Ca(2+). Positions 67, 70, 138, and 171 each coordinate Mn(2+). Serine 204 contacts Ca(2+). The tract at residues 204 to 225 (STPGRYVQDPNPTEPSFSNPRR) is disordered. Over residues 213-225 (PNPTEPSFSNPRR) the composition is skewed to polar residues.

It belongs to the manganese catalase family. The cofactor is Ca(2+). Mn(2+) serves as cofactor.

It carries out the reaction 2 H2O2 = O2 + 2 H2O. In terms of biological role, catalyzes the decomposition of hydrogen peroxide into water and oxygen. The sequence is that of Probable manganese catalase from Clostridium acetobutylicum (strain ATCC 824 / DSM 792 / JCM 1419 / IAM 19013 / LMG 5710 / NBRC 13948 / NRRL B-527 / VKM B-1787 / 2291 / W).